The chain runs to 602 residues: Peptide-N(4)-(N-acetyl-beta-glucosaminyl)asparagine amidase (602 aa).

Positions 2–130 (PVREVSRLPE…EKKFLERFVG (129 aa)) constitute a Thioredoxin domain. 4 residues coordinate Zn(2+): C189, C192, C222, and C225. C248 functions as the Nucleophile in the catalytic mechanism. Active-site residues include H275 and D292. Residues 400–602 (DMGGRTTGSK…ESMVVRVYMK (203 aa)) enclose the PAW domain.

Belongs to the transglutaminase-like superfamily. PNGase family. Zn(2+) serves as cofactor.

The protein localises to the cytoplasm. It localises to the endoplasmic reticulum. The catalysed reaction is Hydrolysis of an N(4)-(acetyl-beta-D-glucosaminyl)asparagine residue in which the glucosamine residue may be further glycosylated, to yield a (substituted) N-acetyl-beta-D-glucosaminylamine and a peptide containing an aspartate residue.. Its function is as follows. Specifically deglycosylates the denatured form of N-linked glycoproteins in the cytoplasm and assists their proteasome-mediated degradation. Cleaves the beta-aspartyl-glucosamine (GlcNAc) of the glycan and the amide side chain of Asn, converting Asn to Asp. Prefers proteins containing high-mannose over those bearing complex type oligosaccharides. Can recognize misfolded proteins in the endoplasmic reticulum that are exported to the cytosol to be destroyed and deglycosylate them, while it has no activity toward native proteins. Deglycosylation is a prerequisite for subsequent proteasome-mediated degradation of some, but not all, misfolded glycoproteins. Also displays oxidoreductase (thioredoxin) activity. The protein is Peptide-N(4)-(N-acetyl-beta-glucosaminyl)asparagine amidase (png-1) of Caenorhabditis briggsae.